The sequence spans 487 residues: Protein nucleotidyltransferase YdiU (487 aa).

ATP contacts are provided by G91, G93, R94, K114, D126, G127, R177, and R184. The active-site Proton acceptor is D253. Mg(2+)-binding residues include N254 and D263. An ATP-binding site is contributed by D263.

Belongs to the SELO family. The cofactor is Mg(2+). It depends on Mn(2+) as a cofactor.

It catalyses the reaction L-seryl-[protein] + ATP = 3-O-(5'-adenylyl)-L-seryl-[protein] + diphosphate. The enzyme catalyses L-threonyl-[protein] + ATP = 3-O-(5'-adenylyl)-L-threonyl-[protein] + diphosphate. It carries out the reaction L-tyrosyl-[protein] + ATP = O-(5'-adenylyl)-L-tyrosyl-[protein] + diphosphate. The catalysed reaction is L-histidyl-[protein] + UTP = N(tele)-(5'-uridylyl)-L-histidyl-[protein] + diphosphate. It catalyses the reaction L-seryl-[protein] + UTP = O-(5'-uridylyl)-L-seryl-[protein] + diphosphate. The enzyme catalyses L-tyrosyl-[protein] + UTP = O-(5'-uridylyl)-L-tyrosyl-[protein] + diphosphate. Its function is as follows. Nucleotidyltransferase involved in the post-translational modification of proteins. It can catalyze the addition of adenosine monophosphate (AMP) or uridine monophosphate (UMP) to a protein, resulting in modifications known as AMPylation and UMPylation. This Yersinia pestis (strain Pestoides F) protein is Protein nucleotidyltransferase YdiU.